The sequence spans 238 residues: Aspartate/glutamate leucyltransferase (238 aa).

It belongs to the R-transferase family. Bpt subfamily.

It is found in the cytoplasm. It catalyses the reaction N-terminal L-glutamyl-[protein] + L-leucyl-tRNA(Leu) = N-terminal L-leucyl-L-glutamyl-[protein] + tRNA(Leu) + H(+). It carries out the reaction N-terminal L-aspartyl-[protein] + L-leucyl-tRNA(Leu) = N-terminal L-leucyl-L-aspartyl-[protein] + tRNA(Leu) + H(+). Functionally, functions in the N-end rule pathway of protein degradation where it conjugates Leu from its aminoacyl-tRNA to the N-termini of proteins containing an N-terminal aspartate or glutamate. This chain is Aspartate/glutamate leucyltransferase, found in Shewanella sp. (strain MR-4).